Reading from the N-terminus, the 141-residue chain is Hemoglobin subunit alpha (141 aa).

The region spanning 1–141 (VLSSKDKANI…VSTVLTSKYR (141 aa)) is the Globin domain. Ser-3 bears the Phosphoserine mark. Lys-7 and Lys-11 each carry N6-succinyllysine. Lys-16 carries the N6-acetyllysine; alternate modification. Lys-16 is subject to N6-succinyllysine; alternate. A Phosphotyrosine modification is found at Tyr-24. Lys-40 carries the N6-succinyllysine modification. A Phosphoserine modification is found at Ser-49. Position 58 (His-58) interacts with O2. His-87 contacts heme b. Ser-102 is subject to Phosphoserine. Thr-108 is subject to Phosphothreonine. At Ser-124 the chain carries Phosphoserine. A phosphothreonine mark is found at Thr-134 and Thr-137. Ser-138 carries the phosphoserine modification.

Belongs to the globin family. As to quaternary structure, heterotetramer of two alpha chains and two beta chains. As to expression, red blood cells.

Involved in oxygen transport from the lung to the various peripheral tissues. Its function is as follows. Hemopressin acts as an antagonist peptide of the cannabinoid receptor CNR1. Hemopressin-binding efficiently blocks cannabinoid receptor CNR1 and subsequent signaling. This is Hemoglobin subunit alpha (HBA) from Lama glama (Llama).